The chain runs to 859 residues: MVSIAFYGGIPGGISTPITQQSEKSKCEENTMFQPYCYNNDSKNSMAESKEARDQEMNLKEESKEEKRRNDWWKKGMFLLCLAGTTGGILWWYEGLPQQHYIGLVAIGGRLNGSGQSNAIECWGSFPGCRPFQNYFSYETNRSMHMDNNTATLLEAYHREITFIYKSSCTDSDHCQEYQCKKVNLNSSDSSNSVRVEDVTNTAEYWGFKWLECNQTENFKTILVPENEMVNINDTDTWIPKGCNETWARVKRCPIDILYGIHPIRLCVQPPFFLVQEKGIADTSRIGNCGPTIFLGVLEDNKGVVRGDYIACNVRRLNINRKDYTGIYQVPIFYTCTFTNITSCNNEPIISVIMYETNQVQYLLCNNNNSNNYNCVVQSFGVIGQAHLELPRPNKRIRNQSFNQYNCSINNKTELETWKLVKTSGVTPLPISSEANTGLIRHKRDFGISAIVAAIVAATAIAASATMSYVALTEVNKIMEVQNHTFEVENSTLNGMDLIERQIKILYAMILQTHADVQLLKERQQVEETFNLIGCIERTHVFCHTGHPWNMSWGHLNESTQWDDWVSKMEDLNQEILTTLHGARNNLAQSMITFNTPDSIAQFGKDLWSHIGNWIPGLGASIIKYIVMFLLIYLLLTSSPKILRALWKVTSGAGSSGSRYLKKKFHHKHASREDTWDQAQHNIHLAGVTGGSGDKYYKQKYSRNDWNGESEEYNRRPKSWVKSIEAFGESYISEKTKGEISQPGAAINEHKNGSGGNNPHQGSLDLEIRSEGGNIYDCCIKAQEGTLAIPCCGFPLWLFWGLVIIVGRIAGYGLRGLAVIIRICIRGLNLIFEIIRKMLDYIGRALNPGTSHVSMPQYV.

Positions 1-6 (MVSIAF) are excised as a propeptide. At 7-614 (YGGIPGGIST…KDLWSHIGNW (608 aa)) the chain is on the extracellular side. Asn40 carries N-linked (GlcNAc...) asparagine; by host glycosylation. Residues 47–66 (AESKEARDQEMNLKEESKEE) are disordered. A compositionally biased stretch (basic and acidic residues) spans 48 to 66 (ESKEARDQEMNLKEESKEE). Asn112, Asn141, Asn148, Asn186, Asn214, Asn233, Asn244, Asn340, Asn368, Asn399, Asn406, and Asn411 each carry an N-linked (GlcNAc...) asparagine; by host glycan. The tract at residues 446–466 (FGISAIVAAIVAATAIAASAT) is fusion peptide. N-linked (GlcNAc...) asparagine; by host glycans are attached at residues Asn483 and Asn490. The interval 498 to 513 (LIERQIKILYAMILQT) is immunosuppression. N-linked (GlcNAc...) asparagine; by host glycans are attached at residues Asn550 and Asn557. Coiled-coil stretches lie at residues 576–624 (ILTT…SIIK) and 663–699 (KKFH…YYKQ). A helical transmembrane segment spans residues 615–635 (IPGLGASIIKYIVMFLLIYLL). Residues 636 to 859 (LTSSPKILRA…TSHVSMPQYV (224 aa)) are Cytoplasmic-facing.

In terms of assembly, the mature envelope protein (Env) consists of a trimer of SU-TM heterodimers attached by noncovalent interactions or by a labile interchain disulfide bond. In terms of processing, specific enzymatic cleavages in vivo yield mature proteins. Envelope glycoproteins are synthesized as an inactive precursor that is N-glycosylated and processed likely by host cell furin or by a furin-like protease in the Golgi to yield the mature SU and TM proteins. The cleavage site between SU and TM requires the minimal sequence [KR]-X-[KR]-R.

It localises to the virion membrane. It is found in the host cell membrane. The surface protein (SU) attaches the virus to the host cell by binding to its receptor. This interaction triggers the refolding of the transmembrane protein (TM) and is thought to activate its fusogenic potential by unmasking its fusion peptide. Fusion occurs at the host cell plasma membrane. Functionally, the transmembrane protein (TM) acts as a class I viral fusion protein. Under the current model, the protein has at least 3 conformational states: pre-fusion native state, pre-hairpin intermediate state, and post-fusion hairpin state. During viral and target cell membrane fusion, the coiled coil regions (heptad repeats) assume a trimer-of-hairpins structure, positioning the fusion peptide in close proximity to the C-terminal region of the ectodomain. The formation of this structure appears to drive apposition and subsequent fusion of viral and target cell membranes. Membranes fusion leads to delivery of the nucleocapsid into the cytoplasm. The polypeptide is Envelope glycoprotein (env) (Equus asinus (Donkey)).